The chain runs to 446 residues: Na(+)-translocating NADH-quinone reductase subunit A (446 aa).

The protein belongs to the NqrA family. Composed of six subunits; NqrA, NqrB, NqrC, NqrD, NqrE and NqrF.

The enzyme catalyses a ubiquinone + n Na(+)(in) + NADH + H(+) = a ubiquinol + n Na(+)(out) + NAD(+). Functionally, NQR complex catalyzes the reduction of ubiquinone-1 to ubiquinol by two successive reactions, coupled with the transport of Na(+) ions from the cytoplasm to the periplasm. NqrA to NqrE are probably involved in the second step, the conversion of ubisemiquinone to ubiquinol. The polypeptide is Na(+)-translocating NADH-quinone reductase subunit A (Vibrio anguillarum (Listonella anguillarum)).